Consider the following 1235-residue polypeptide: MNSQVMYHNVPTPPGNVSLAAAAPDGGLLYAGIRCINYISAPPANGEQPQVVTMSTRINILALDVSPMWGLGNGGPTKPFAIVGDDLSVQVWDCALGEAVIGHKAHQHQHEARDVRVVHHTTNSVLMSYLANGNILSMDASDLVIYCVASNTYCRRSTFISPRNHQLTMVRCSPYNDNLFAVGTAMGNVLVCDLRKMNIVYKFHGHKAPICGLAWREVPAAEDEKTNNLALSAEEWRSRNGGQEEKPKTKPPPLTKSKAAESDDPFDIYNFDHLEYEFGAPIAERRRKSSEDCGGEFVGLEKPAGAAVLDFVEACESVKAELLASRQEDKTQHVEVTLHDCEPTKPTGPLSDASTISNKNDASDSTEGSLEVIQYSSSSDDAVIVDGEAAKPKREVLHHIYHQAEVHASGTPQTKSEPQSNLQVVPAISAETISLTSVNSTHLETLLVSIDGDEVMMIWNTNTGAHAGKNYSKSKTAGKLNNVYWLNNHVIVSLSRHQLFFWSVEFERKMLRYKISKDKSHSCHLQDIVSFACDSSKEMIWLCRNNRQIGMMNPKTGRMADFYGTVAFGVRAMAECPDDMNKIALGCSDRRVAFFDISKLTTSCLPIDSVYVSSNVYCLAWSPNCLELAFGTFDGTVGILDVERMKVKTHLRTPHKKEVYSLVWQDHFIYFIVNRVLGFFDLRKSKIEPTIVNCISRPSYLSIRDSFLFVGTDDGLLQIHERDSGMEKSWSPFIRQSALFARYVTDIAWCPLDSNKFAVSGNDRSVYVMEFQPTERNWKTLHTFTANTEKASITSMRWSHTQKHLLLTFHIEGKVCLWNCNAPEKPPLTITYHCPMWCGMFLPTNENIIMCSGKALSVELIDIKDALEGDEKSICPKVDALLNVKWASKSLTQPYAPVLTAAEKKRQRRDQRKAAAKLEVDVANKDQKKIQESVTAVIDNPTNDKCTQETPVEEMLEALSLDKEQNNRSAKECPKCKEQSPDSFTHSRTCLYLTQKELNKSALEKLAIVLTEDSAKIDKSVLISKLFSSKVMAKELIATELTNLKHSNTKDIAPLCLAMSTFKLREELEQHIANKTLTERHVSLAPSVSFTLWQDCCRAYAKQMEEKGYIMHAATYLFSQGMQSEAIKLFLANEYYKEALVHARICLPATDPLIKTVINNWLEHLEGTGNFAAAALICVLDNEMLRGYSYLRKYRNCTPEIADLMDQIKRIGQLGGVLDGCAPNEPIHNGSTAEH.

The WD 1 repeat unit spans residues 55 to 102; it reads STRINILALDVSPMWGLGNGGPTKPFAIVGDDLSVQVWDCALGEAVIG. The disordered stretch occupies residues 227 to 263; it reads NNLALSAEEWRSRNGGQEEKPKTKPPPLTKSKAAESD. The segment covering 234-248 has biased composition (basic and acidic residues); the sequence is EEWRSRNGGQEEKPK. 4 positions are modified to phosphoserine: Ser-289, Ser-290, Ser-351, and Ser-354. The interval 340-368 is disordered; it reads DCEPTKPTGPLSDASTISNKNDASDSTEG. The span at 352–368 shows a compositional bias: polar residues; the sequence is DASTISNKNDASDSTEG. Phosphothreonine is present on Thr-355. Residue Ser-357 is modified to Phosphoserine. Thr-411 carries the post-translational modification Phosphothreonine. WD repeat units follow at residues 428–469, 475–512, 565–605, 611–650, 690–730, 739–779, and 788–828; these read ISAE…HAGK, KTAG…KMLR, TVAF…TSCL, YVSS…VKTH, TIVN…EKSW, LFAR…RNWK, and TEKA…KPPL. An LXXLL motif motif is present at residues 443–447; the sequence is LETLL. Over residues 963–980 the composition is skewed to basic and acidic residues; it reads KEQNNRSAKECPKCKEQS. The disordered stretch occupies residues 963–983; sequence KEQNNRSAKECPKCKEQSPDS.

In terms of assembly, component of the core survival motor neuron (SMN) complex composed of Smn, Gem2, Gem3, rig/Gem5 and one of 3 almost identical Gem4 paralogs encoded by Glos/Gem4a, Gem4b or Gem4c. Interacts with nuclear receptors EcR, svp (seven up), usp (ultraspiracle), Hr39 and Hr3. Expressed in the brain and salivary glands of early and late second instar larvae. Expressed in nurse cells and oocytes.

It localises to the nucleus. Its subcellular location is the cytoplasm. It is found in the U-body. The protein resides in the gem. In terms of biological role, component of the survival motor neuron (SMN) complex that catalyzes the assembly of small nuclear ribonucleoproteins (snRNPs), the building blocks of the spliceosome, and thereby plays an important role in the splicing of cellular pre-mRNAs. Nuclear receptor cofactor for the ecdysone-regulated processes of molting and puparium formation. Acts downstream from ecdysone biosynthesis and release to control the expression of specific ecdysone-regulated genes such as Eip74EF (E74). Essential in muscle and neuronal tissues for motor function, including climbing ability and flight. This chain is Gem-associated protein 5, found in Drosophila melanogaster (Fruit fly).